The chain runs to 151 residues: Large-conductance mechanosensitive channel (151 aa).

The next 2 helical transmembrane spans lie at 19–39 (VGII…GDVL) and 85–105 (GLFI…FFLV).

This sequence belongs to the MscL family. Homopentamer.

The protein resides in the cell inner membrane. Functionally, channel that opens in response to stretch forces in the membrane lipid bilayer. May participate in the regulation of osmotic pressure changes within the cell. In Chlorobaculum parvum (strain DSM 263 / NCIMB 8327) (Chlorobium vibrioforme subsp. thiosulfatophilum), this protein is Large-conductance mechanosensitive channel.